A 268-amino-acid chain; its full sequence is WUSCHEL-related homeobox 12 (268 aa).

Polar residues predominate over residues Met-1 to Glu-16. Disordered regions lie at residues Met-1–Trp-22 and Ser-173–Asn-198. Positions Pro-17–His-81 form a DNA-binding region, homeobox; WUS-type.

This sequence belongs to the WUS homeobox family.

The protein resides in the nucleus. Its function is as follows. Transcription factor which may be involved in developmental processes. This chain is WUSCHEL-related homeobox 12 (WOX12), found in Arabidopsis thaliana (Mouse-ear cress).